The primary structure comprises 22 residues: Motilin (22 aa).

Positions 1 to 22 (FVPIFTHSELQKIREKERNKGQ) are disordered. Basic and acidic residues predominate over residues 9-22 (ELQKIREKERNKGQ).

Belongs to the motilin family.

Its subcellular location is the secreted. Its function is as follows. Plays an important role in the regulation of interdigestive gastrointestinal motility and indirectly causes rhythmic contraction of duodenal and colonic smooth muscle. In Canis lupus familiaris (Dog), this protein is Motilin (MLN).